The chain runs to 158 residues: Transcription elongation factor GreA (158 aa).

Residues 47–73 are a coiled coil; that stretch reads AEYHAAREKQSFIEGRIQELQAKLARA.

The protein belongs to the GreA/GreB family.

Functionally, necessary for efficient RNA polymerase transcription elongation past template-encoded arresting sites. The arresting sites in DNA have the property of trapping a certain fraction of elongating RNA polymerases that pass through, resulting in locked ternary complexes. Cleavage of the nascent transcript by cleavage factors such as GreA or GreB allows the resumption of elongation from the new 3'terminus. GreA releases sequences of 2 to 3 nucleotides. The sequence is that of Transcription elongation factor GreA from Thermodesulfovibrio yellowstonii (strain ATCC 51303 / DSM 11347 / YP87).